The sequence spans 1377 residues: DNA-directed RNA polymerase subunit beta' (1377 aa).

Residues Cys-60, Cys-62, Cys-75, and Cys-78 each contribute to the Zn(2+) site. Mg(2+) is bound by residues Asp-449, Asp-451, and Asp-453. Zn(2+) is bound by residues Cys-777, Cys-851, Cys-858, and Cys-861.

This sequence belongs to the RNA polymerase beta' chain family. The RNAP catalytic core consists of 2 alpha, 1 beta, 1 beta' and 1 omega subunit. When a sigma factor is associated with the core the holoenzyme is formed, which can initiate transcription. It depends on Mg(2+) as a cofactor. Requires Zn(2+) as cofactor.

It catalyses the reaction RNA(n) + a ribonucleoside 5'-triphosphate = RNA(n+1) + diphosphate. Its function is as follows. DNA-dependent RNA polymerase catalyzes the transcription of DNA into RNA using the four ribonucleoside triphosphates as substrates. The sequence is that of DNA-directed RNA polymerase subunit beta' from Borreliella burgdorferi (strain ATCC 35210 / DSM 4680 / CIP 102532 / B31) (Borrelia burgdorferi).